The primary structure comprises 116 residues: Large ribosomal subunit protein bL17 (116 aa).

The protein belongs to the bacterial ribosomal protein bL17 family. In terms of assembly, part of the 50S ribosomal subunit. Contacts protein L32.

In Microcystis aeruginosa (strain NIES-843 / IAM M-2473), this protein is Large ribosomal subunit protein bL17.